Here is a 340-residue protein sequence, read N- to C-terminus: Glyceraldehyde-3-phosphate dehydrogenase (340 aa).

NAD(+)-binding positions include 11 to 12 (SI) and Gly111. 140–142 (SCN) serves as a coordination point for D-glyceraldehyde 3-phosphate. Cys141 (nucleophile) is an active-site residue. Arg169 provides a ligand contact to NAD(+). 195 to 196 (HG) is a binding site for D-glyceraldehyde 3-phosphate. An NAD(+)-binding site is contributed by Gln303.

This sequence belongs to the glyceraldehyde-3-phosphate dehydrogenase family. As to quaternary structure, homotetramer.

The protein localises to the cytoplasm. The catalysed reaction is D-glyceraldehyde 3-phosphate + phosphate + NADP(+) = (2R)-3-phospho-glyceroyl phosphate + NADPH + H(+). The enzyme catalyses D-glyceraldehyde 3-phosphate + phosphate + NAD(+) = (2R)-3-phospho-glyceroyl phosphate + NADH + H(+). The protein operates within carbohydrate degradation; glycolysis; pyruvate from D-glyceraldehyde 3-phosphate: step 1/5. This Methanococcus maripaludis (strain C7 / ATCC BAA-1331) protein is Glyceraldehyde-3-phosphate dehydrogenase.